Reading from the N-terminus, the 304-residue chain is ATP synthase gamma chain (304 aa).

This sequence belongs to the ATPase gamma chain family. As to quaternary structure, F-type ATPases have 2 components, CF(1) - the catalytic core - and CF(0) - the membrane proton channel. CF(1) has five subunits: alpha(3), beta(3), gamma(1), delta(1), epsilon(1). CF(0) has three main subunits: a, b and c.

It is found in the cell membrane. In terms of biological role, produces ATP from ADP in the presence of a proton gradient across the membrane. The gamma chain is believed to be important in regulating ATPase activity and the flow of protons through the CF(0) complex. The sequence is that of ATP synthase gamma chain from Chloroherpeton thalassium (strain ATCC 35110 / GB-78).